A 430-amino-acid chain; its full sequence is KIN17-like protein (430 aa).

A C2H2-type zinc finger spans residues 28–50 (CQMCQKQCRDENGFKCHCMSESH). Positions 51–160 (QRQMQVFGQA…KARLKRKRIK (110 aa)) are winged helix-turn-helix (wHTH). Residues 147–183 (EQAVKARLKRKRIKSDLAEDERQERMIARQIERAQQS) adopt a coiled-coil conformation. Residues 155-158 (KRKR) carry the Nuclear localization signal (NLS) motif. Disordered regions lie at residues 179–230 (RAQQ…ANKA) and 261–284 (EEED…GKDA). Acidic residues predominate over residues 209–224 (EYSDSENDHEGQEEDA). A compositionally biased stretch (basic and acidic residues) spans 261-278 (EEEDEVSARDKEKEELAK). The stretch at 283 to 312 (DAINAAEARRSALDELMKEEEKAKERSNRK) forms a coiled coil. The interval 319–370 (GIVVKVMSKSLAEKGYCKQKGVVKRVIDKYVGEIEMLESKHVLRVDQDELET) is C-terminal subdomain A. The tract at residues 376 to 427 (GGLVRIVNGAYRGSNARLLSVDTERFCAKVQVEKGLYDGKVLKAIEYEDICK) is C-terminal subdomain B.

It belongs to the KIN17 family.

The protein resides in the nucleus. The protein is KIN17-like protein of Oryza sativa subsp. indica (Rice).